A 773-amino-acid polypeptide reads, in one-letter code: Transducin-like enhancer protein 4 (773 aa).

Disordered stretches follow at residues 1–22 (MIRDLSKMYPQTRHPAPHQPAQ), 140–162 (HGHGLPVPLTPHPSGLQPPAIPP), and 182–360 (LPIK…ASSL). The q domain stretch occupies residues 1 to 136 (MIRDLSKMYP…AIIGQQLQAQ (136 aa)). The GP domain stretch occupies residues 137–204 (HLSHGHGLPV…HQRDRDSIKS (68 aa)). Basic and acidic residues predominate over residues 183-202 (PIKDEKKHHDNDHQRDRDSI). Residues 203–212 (KSSSVSPSAS) show a composition bias toward low complexity. Positions 205–274 (SSVSPSASFR…SPRGSPAHSP (70 aa)) are ccN domain. Ser-208, Ser-212, and Ser-222 each carry phosphoserine. The segment covering 215 to 252 (GAEKHRNSADYSSESKKQKTEEKEIAARYDSDGEKSDD) has biased composition (basic and acidic residues). An N6-acetyllysine modification is found at Lys-237. Phosphoserine is present on residues Ser-245, Ser-250, Ser-269, and Ser-273. The span at 273-289 (SPRENGLDKTRLLKKDA) shows a compositional bias: basic and acidic residues. Positions 275–452 (RENGLDKTRL…PGGKPAYSFH (178 aa)) are SP domain. An N6-acetyllysine modification is found at Lys-281. A compositionally biased stretch (low complexity) spans 290-305 (PISPASIASSSSTPSS). Ser-292 carries the phosphoserine modification. Positions 317–328 (TTPVSKSNTPTP) are enriched in polar residues. Thr-318 bears the Phosphothreonine mark. A phosphoserine mark is found at Ser-321 and Ser-323. Phosphothreonine is present on residues Thr-325, Thr-327, Thr-334, and Thr-340. Ser-419 carries the post-translational modification Phosphoserine. WD repeat units lie at residues 485–523 (NHGEVVCAVTISNPTRHVYTGGKGCVKVWDISHPGNKSP), 531–570 (NRDNYIRSCRLLPDGRTLIVGGEASTLSIWDLAAPTPRIK), 575–614 (SSAPACYALAISPDSKVCFSCCSDGNIAVWDLHNQTLVRQ), 617–656 (GHTDGASCIDISNDGTKLWTGGLDNTVRSWDLREGRQLQQ), 658–697 (DFTSQIFSLGYCPTGEWLAVGMENSNVEVLHVTKPDKYQL), 699–738 (LHESCVLSLKFAHCGKWFVSTGKDNLLNAWRTPYGASIFQ), and 740–773 (KESSSVLSCDISVDDKYIVTGSGDKKATVYEVIY).

The protein belongs to the WD repeat Groucho/TLE family. Homooligomer and heterooligomer with other family members. Interacts with PAX5. Interacts with LEF1, TCF7, TCF7L1 and TCF7L2. Interacts with ZNF703; TLE4 may mediate ZNF703 transcriptional repression. Interacts with SIX3 and SIX6. Interacts with PAX2. Interacts with TLE1. Post-translationally, phosphorylated. PAX5 binding increases phosphorylation. Ubiquitinated by XIAP/BIRC4. In terms of tissue distribution, in all tissues examined, mostly in brain, and muscle.

It localises to the nucleus. In terms of biological role, transcriptional corepressor that binds to a number of transcription factors. Inhibits the transcriptional activation mediated by PAX5, and by CTNNB1 and TCF family members in Wnt signaling. The effects of full-length TLE family members may be modulated by association with dominant-negative AES. Essential for the transcriptional repressor activity of SIX3 during retina and lens development and for SIX3 transcriptional auto-repression. Involved in transcriptional repression of GNRHR and enhances MSX1-mediated transcriptional repression of CGA/alpha-GSU. This Homo sapiens (Human) protein is Transducin-like enhancer protein 4 (TLE4).